The chain runs to 192 residues: MKNNVVVVTGVPGVGSTTVMQKAMDKLIEEKISYKMVNFGSMMFEVAKEEGLAEERDQMRKLNPETQKRIQKMAGRKIAELSKHSPVAVDTHSTVKTPKGYLPGLPAWVLNELNPDMVIVVETDGDEILMRRMGDESRNRDLETTKSIEEHQFMNRCAAMAYGVLTGATVKIVKNKNGLVDNAVEELISVLR.

10–18 (GVPGVGSTT) is a binding site for ATP.

It belongs to the archaeal adenylate kinase family. As to quaternary structure, monomer.

The protein localises to the cytoplasm. It catalyses the reaction AMP + ATP = 2 ADP. This Methanococcus vannielii (strain ATCC 35089 / DSM 1224 / JCM 13029 / OCM 148 / SB) protein is Adenylate kinase.